We begin with the raw amino-acid sequence, 255 residues long: 3-deoxy-manno-octulosonate cytidylyltransferase (255 aa).

The protein belongs to the KdsB family.

The protein resides in the cytoplasm. The enzyme catalyses 3-deoxy-alpha-D-manno-oct-2-ulosonate + CTP = CMP-3-deoxy-beta-D-manno-octulosonate + diphosphate. Its pathway is nucleotide-sugar biosynthesis; CMP-3-deoxy-D-manno-octulosonate biosynthesis; CMP-3-deoxy-D-manno-octulosonate from 3-deoxy-D-manno-octulosonate and CTP: step 1/1. It participates in bacterial outer membrane biogenesis; lipopolysaccharide biosynthesis. Its function is as follows. Activates KDO (a required 8-carbon sugar) for incorporation into bacterial lipopolysaccharide in Gram-negative bacteria. This is 3-deoxy-manno-octulosonate cytidylyltransferase from Pelobacter propionicus (strain DSM 2379 / NBRC 103807 / OttBd1).